The chain runs to 545 residues: Cryptochrome-1 (545 aa).

Residues 3-138 (VNNILWFRHG…KCVEKVSHTL (136 aa)) enclose the Photolyase/cryptochrome alpha/beta domain. FAD contacts are provided by residues Arg-236, Ser-264, Ser-266, Gln-307, His-374, 406-408 (DAD), Cys-412, and Asn-415.

It belongs to the DNA photolyase class-1 family. In terms of assembly, interacts with tim and per; promoted by light conditions. Requires FAD as cofactor.

The protein localises to the cytoplasm. It localises to the perinuclear region. It is found in the nucleus. In terms of biological role, blue light-dependent regulator that is the input of the circadian feedback loop. Has no photolyase activity for cyclobutane pyrimidine dimers or 6-4 photoproducts. Regulation of expression by light suggests a role in photoreception for locomotor activity rhythms. Functions, together with per, as a transcriptional repressor required for the oscillation of peripheral circadian clocks and for the correct specification of clock cells. Genes directly activated by the transcription factors Clock (Clk) and cycle (cyc) are repressed by cry. This is Cryptochrome-1 from Aedes aegypti (Yellowfever mosquito).